The primary structure comprises 722 residues: Cellulose synthase-like protein G2 (722 aa).

2 consecutive transmembrane segments (helical) span residues isoleucine 25–isoleucine 45 and threonine 51–threonine 71. Residues aspartate 139 and aspartate 437 contribute to the active site. 6 helical membrane-spanning segments follow: residues phenylalanine 514 to isoleucine 534, phenylalanine 548 to leucine 568, tryptophan 583 to leucine 605, proline 635 to methionine 655, glycine 660 to valine 680, and isoleucine 702 to lysine 722.

This sequence belongs to the glycosyltransferase 2 family. Plant cellulose synthase-like G subfamily. Expressed in young seedlings, primarily in the vascular tissue.

Its subcellular location is the golgi apparatus membrane. In terms of biological role, thought to be a Golgi-localized beta-glycan synthase that polymerize the backbones of noncellulosic polysaccharides (hemicelluloses) of plant cell wall. This is Cellulose synthase-like protein G2 (CSLG2) from Arabidopsis thaliana (Mouse-ear cress).